Reading from the N-terminus, the 1547-residue chain is DNA topoisomerase 2 (1547 aa).

Residues 8–30 are disordered; sequence FNKMSSPKQNGTGEPAPAKGQKG. Polar residues predominate over residues 9-19; the sequence is NKMSSPKQNGT. ATP contacts are provided by residues asparagine 99, asparagine 128, 156-158, and 169-176; these read SSN and GRNGYGAK. Residues 351–353 are interaction with DNA; that stretch reads KKK. Residue 385 to 387 participates in ATP binding; sequence QTK. The 118-residue stretch at 463–580 folds into the Toprim domain; the sequence is CTLILTEGDS…ELLKLPFLEE (118 aa). Glutamate 469, aspartate 549, and aspartate 551 together coordinate Mg(2+). The Topo IIA-type catalytic domain occupies 723 to 1192; that stretch reads IPSMIDGLKP…TAPMLWREDL (470 aa). Catalysis depends on tyrosine 813, which acts as the O-(5'-phospho-DNA)-tyrosine intermediate. The interaction with DNA stretch occupies residues 996–1005; the sequence is KLQTTISMTC. Disordered stretches follow at residues 1107–1134, 1209–1249, 1261–1423, and 1459–1547; these read TALEDDDAQESEEEEPEPDPKGKPVDPD, EELN…ISDD, KTRK…MDSD, and RQRR…SLSD. Positions 1109 to 1123 are enriched in acidic residues; the sequence is LEDDDAQESEEEEPE. A compositionally biased stretch (basic and acidic residues) spans 1124–1134; sequence PDPKGKPVDPD. The segment covering 1216 to 1228 has biased composition (basic residues); it reads KTSKAMAGKKNRK. Basic and acidic residues-rich tracts occupy residues 1238 to 1249 and 1294 to 1315; these read NGRRVEPKISDD and EKPEKAEKPDKVDKAEKTDGLK. Positions 1331–1344 are enriched in low complexity; that stretch reads TFSGSSSGEMSASD. The segment covering 1373–1383 has biased composition (acidic residues); sequence DDSGSDSEPEL. Basic and acidic residues-rich tracts occupy residues 1384 to 1394 and 1459 to 1488; these read LDNKIDSDHEA and RQRRCDTSVPPKEKAAPKRKLMNVDKDEKK. Positions 1513 to 1528 are enriched in basic residues; sequence KGKKKTAANPKKKAKK. Residues 1537 to 1547 are compositionally biased toward polar residues; sequence DFNISDSSLSD.

It belongs to the type II topoisomerase family. Homodimer. The cofactor is Mg(2+). It depends on Mn(2+) as a cofactor. Ca(2+) serves as cofactor.

The protein resides in the nucleus. It catalyses the reaction ATP-dependent breakage, passage and rejoining of double-stranded DNA.. In terms of biological role, control of topological states of DNA by transient breakage and subsequent rejoining of DNA strands. Topoisomerase II makes double-strand breaks. This Bombyx mori (Silk moth) protein is DNA topoisomerase 2 (TOP2).